Here is a 675-residue protein sequence, read N- to C-terminus: Methionine--tRNA ligase (675 aa).

The short motif at 15 to 25 (PYANGSIHLGH) is the 'HIGH' region element. C146, C149, C159, and C162 together coordinate Zn(2+). The 'KMSKS' region signature appears at 332 to 336 (KMSKS). K335 provides a ligand contact to ATP. One can recognise a tRNA-binding domain in the interval 573-675 (DFAKVDMRIA…SGAQPGMQVK (103 aa)).

Belongs to the class-I aminoacyl-tRNA synthetase family. MetG type 1 subfamily. As to quaternary structure, homodimer. Requires Zn(2+) as cofactor.

It localises to the cytoplasm. It catalyses the reaction tRNA(Met) + L-methionine + ATP = L-methionyl-tRNA(Met) + AMP + diphosphate. In terms of biological role, is required not only for elongation of protein synthesis but also for the initiation of all mRNA translation through initiator tRNA(fMet) aminoacylation. The polypeptide is Methionine--tRNA ligase (Yersinia pseudotuberculosis serotype O:1b (strain IP 31758)).